The sequence spans 127 residues: Large ribosomal subunit protein bL17 (127 aa).

The protein belongs to the bacterial ribosomal protein bL17 family. Part of the 50S ribosomal subunit. Contacts protein L32.

This chain is Large ribosomal subunit protein bL17, found in Stenotrophomonas maltophilia (strain R551-3).